Reading from the N-terminus, the 342-residue chain is Replication factor C subunit 3 (342 aa).

63-70 (GPPGTGKT) provides a ligand contact to ATP.

The protein belongs to the activator 1 small subunits family. In terms of assembly, heteropentamer of subunits rfc1, rfc2, rfc3, rfc4 and rfc5 that forms a complex (RFC) with PCNA in the presence of ATP. Two other complexes exist where rfc1 can be replaced by either ctf18 or elg1 to form the ctf18-RFC or the elg1-RFC complexes respectively.

Its subcellular location is the nucleus. Its function is as follows. The elongation of primed DNA templates by DNA polymerase delta and epsilon requires the action of the accessory proteins PCNA and activator 1. Subunit 3 binds ATP. Also involved in replication and DNA damage checkpoint controls, probably functioning as a checkpoint sensor. The sequence is that of Replication factor C subunit 3 (rfc3) from Schizosaccharomyces pombe (strain 972 / ATCC 24843) (Fission yeast).